The sequence spans 746 residues: Exostosin-1 (746 aa).

The Cytoplasmic segment spans residues 1 to 7; sequence MQAKKRY. A helical; Signal-anchor for type II membrane protein membrane pass occupies residues 8–28; it reads FILLSAGSCLALLFYFGGLQF. The Lumenal portion of the chain corresponds to 29 to 746; that stretch reads RASRSHSRRE…RKKYRDIERL (718 aa). The N-linked (GlcNAc...) asparagine glycan is linked to asparagine 89. Cystine bridges form between cysteine 98–cysteine 103 and cysteine 109–cysteine 152. Residues leucine 166 and tyrosine 203 each coordinate a protein. 4 residues coordinate UDP: lysine 267, lysine 269, tyrosine 271, and arginine 280. Cysteine 298 and cysteine 312 are oxidised to a cystine. Histidine 300 contacts a protein. Tyrosine 319 and tyrosine 324 together coordinate UDP. Residue asparagine 330 is glycosylated (N-linked (GlcNAc...) asparagine). 2 disulfide bridges follow: cysteine 334–cysteine 355 and cysteine 652–cysteine 704. Residues arginine 346 and glutamate 349 each coordinate UDP.

It belongs to the glycosyltransferase 47 family. As to quaternary structure, part of the heparan sulfate polymerase, a dimeric complex composed of EXT1 and EXT2. Could also form homooligomeric complexes. Interacts with NDST1. N-glycosylated.

The protein resides in the golgi apparatus membrane. The protein localises to the golgi apparatus. Its subcellular location is the cis-Golgi network membrane. It is found in the endoplasmic reticulum membrane. It catalyses the reaction 3-O-{alpha-D-GlcNAc-[(1-&gt;4)-beta-D-GlcA-(1-&gt;4)-alpha-D-GlcNAc](n)-(1-&gt;4)-beta-D-GlcA-(1-&gt;3)-beta-D-Gal-(1-&gt;3)-beta-D-Gal-(1-&gt;4)-beta-D-Xyl}-L-seryl-[protein] + UDP-alpha-D-glucuronate = 3-O-{[(1-&gt;4)-beta-D-GlcA-(1-&gt;4)-alpha-D-GlcNAc](n+1)-(1-&gt;4)-beta-D-GlcA-(1-&gt;3)-beta-D-Gal-(1-&gt;3)-beta-D-Gal-(1-&gt;4)-beta-D-Xyl}-L-seryl-[protein] + UDP + H(+). The protein operates within protein modification; protein glycosylation. Functionally, glycosyltransferase forming with EXT2 the heterodimeric heparan sulfate polymerase which catalyzes the elongation of the heparan sulfate glycan backbone. Glycan backbone extension consists in the alternating transfer of (1-&gt;4)-beta-D-GlcA and (1-&gt;4)-alpha-D-GlcNAc residues from their respective UDP-sugar donors. Both EXT1 and EXT2 are required for the full activity of the polymerase since EXT1 bears the N-acetylglucosaminyl-proteoglycan 4-beta-glucuronosyltransferase activity within the complex while EXT2 carries the glucuronosyl-N-acetylglucosaminyl-proteoglycan 4-alpha-N-acetylglucosaminyltransferase activity. Heparan sulfate proteoglycans are ubiquitous components of the extracellular matrix and play an important role in tissue homeostasis and signaling. This Bos taurus (Bovine) protein is Exostosin-1 (EXT1).